The chain runs to 331 residues: HPr kinase/phosphorylase (331 aa).

Active-site residues include His153 and Lys174. 168–175 (GKSGLGKS) lines the ATP pocket. Ser175 serves as a coordination point for Mg(2+). Asp192 functions as the Proton acceptor; for phosphorylation activity. Proton donor; for dephosphorylation activity in the catalytic mechanism. The important for the catalytic mechanism of both phosphorylation and dephosphorylation stretch occupies residues 217–226 (MEIRGLGVVD). Residue Glu218 participates in Mg(2+) binding. Arg259 is an active-site residue. The segment at 280–285 (PIFPGK) is important for the catalytic mechanism of dephosphorylation.

Belongs to the HPrK/P family. As to quaternary structure, homohexamer. The cofactor is Mg(2+).

The catalysed reaction is [HPr protein]-L-serine + ATP = [HPr protein]-O-phospho-L-serine + ADP + H(+). It catalyses the reaction [HPr protein]-O-phospho-L-serine + phosphate + H(+) = [HPr protein]-L-serine + diphosphate. In terms of biological role, catalyzes the ATP- as well as the pyrophosphate-dependent phosphorylation of a specific serine residue in HPr, a phosphocarrier protein of the phosphoenolpyruvate-dependent sugar phosphotransferase system (PTS). HprK/P also catalyzes the pyrophosphate-producing, inorganic phosphate-dependent dephosphorylation (phosphorolysis) of seryl-phosphorylated HPr (P-Ser-HPr). This Pelodictyon phaeoclathratiforme (strain DSM 5477 / BU-1) protein is HPr kinase/phosphorylase.